Reading from the N-terminus, the 498-residue chain is Glycerol kinase (498 aa).

ADP is bound at residue Thr-12. Residues Thr-12, Thr-13, and Ser-14 each coordinate ATP. Thr-12 lines the sn-glycerol 3-phosphate pocket. Arg-16 is a binding site for ADP. Arg-82, Glu-83, Tyr-134, and Asp-243 together coordinate sn-glycerol 3-phosphate. Glycerol-binding residues include Arg-82, Glu-83, Tyr-134, Asp-243, and Gln-244. ADP-binding residues include Thr-265 and Gly-308. ATP contacts are provided by Thr-265, Gly-308, Gln-312, and Gly-411. Gly-411 is a binding site for ADP.

The protein belongs to the FGGY kinase family.

It carries out the reaction glycerol + ATP = sn-glycerol 3-phosphate + ADP + H(+). The protein operates within polyol metabolism; glycerol degradation via glycerol kinase pathway; sn-glycerol 3-phosphate from glycerol: step 1/1. Its activity is regulated as follows. Inhibited by fructose 1,6-bisphosphate (FBP). In terms of biological role, key enzyme in the regulation of glycerol uptake and metabolism. Catalyzes the phosphorylation of glycerol to yield sn-glycerol 3-phosphate. The sequence is that of Glycerol kinase from Brucella suis biovar 1 (strain 1330).